A 152-amino-acid polypeptide reads, in one-letter code: Psoriasis susceptibility 1 candidate gene 1 protein (152 aa).

Residues 1-31 are compositionally biased toward polar residues; that stretch reads MTCTDQKSHSQRALGTQTPALQGPQLLNTDP. A disordered region spans residues 1 to 42; that stretch reads MTCTDQKSHSQRALGTQTPALQGPQLLNTDPSSEETRPPHVN.

Expressed in skin. Also found in heart, placenta, liver, skeletal muscle and pancreas.

The chain is Psoriasis susceptibility 1 candidate gene 1 protein (PSORS1C1) from Homo sapiens (Human).